A 140-amino-acid polypeptide reads, in one-letter code: RNA silencing suppressor (140 aa).

The tract at residues 73–76 is basic; it reads RRRR. 2 C4-type zinc fingers span residues 83–98 and 83–103; these read CERC…GSKC and CERC…NKTC.

Belongs to the carlaviruses nucleic acid-binding protein family.

Its function is as follows. Suppressor of viral-induced RNA silencing. The potential mechanism of action is based on sequestering siRNAs. This is RNA silencing suppressor from Lily symptomless virus (LSV).